A 119-amino-acid chain; its full sequence is Large ribosomal subunit protein uL22 (119 aa).

Belongs to the universal ribosomal protein uL22 family. As to quaternary structure, part of the 50S ribosomal subunit.

This protein binds specifically to 23S rRNA; its binding is stimulated by other ribosomal proteins, e.g. L4, L17, and L20. It is important during the early stages of 50S assembly. It makes multiple contacts with different domains of the 23S rRNA in the assembled 50S subunit and ribosome. In terms of biological role, the globular domain of the protein is located near the polypeptide exit tunnel on the outside of the subunit, while an extended beta-hairpin is found that lines the wall of the exit tunnel in the center of the 70S ribosome. This chain is Large ribosomal subunit protein uL22, found in Rhodopirellula baltica (strain DSM 10527 / NCIMB 13988 / SH1).